A 476-amino-acid chain; its full sequence is Cys-Gly metallodipeptidase dug1 (476 aa).

His-99 is a binding site for Zn(2+). Asp-101 is an active-site residue. Position 133 (Asp-133) interacts with Zn(2+). Catalysis depends on Glu-167, which acts as the Proton acceptor. Zn(2+) is bound by residues Glu-168, Asp-196, and His-446.

Belongs to the peptidase M20A family. In terms of assembly, homodimer. Component of the GSH degradosomal complex. The cofactor is Zn(2+). Mn(2+) is required as a cofactor.

The protein resides in the cytoplasm. Its function is as follows. Catalytic component of the GSH degradosomal complex involved in the degradation of glutathione (GSH) and other peptides containing a gamma-glu-X bond. Has a Gly-Cys dipeptidase activity. The polypeptide is Cys-Gly metallodipeptidase dug1 (dug1) (Schizosaccharomyces pombe (strain 972 / ATCC 24843) (Fission yeast)).